We begin with the raw amino-acid sequence, 33 residues long: Dolabellanin-B2 (33 aa).

Post-translationally, contains two disulfide bonds. Up to two of the methionines may be oxidized to methionine sulfoxides.

Its subcellular location is the secreted. Has antibacterial activity against Gram-negative bacteria E.coli JM109 and DH5-alpha, H.influenza IID 983, and V.vulnificus RIMD 2219009. Has antibacterial activity against Gram-positive bacteria S.aureus IID 1677, B.subtilis RIMD 0225014 and L.monocytogenes VIU206. Possesses antifungal activity against S.cerevisiae A581A, S.pombe IFO 1628, C.albicans ATCC 36232 and TIMM-1623, and C.tropicalis TIMM-0313. The chain is Dolabellanin-B2 from Dolabella auricularia (Shoulderblade sea cat).